A 418-amino-acid chain; its full sequence is Phosphoglycerate kinase (418 aa).

Residues 18–20 (DFN), arginine 34, 57–60 (HLGR), arginine 115, and arginine 171 each bind substrate. Residues lysine 224, glycine 315, glutamate 346, and 375–378 (GGDS) each bind ATP.

The protein belongs to the phosphoglycerate kinase family. In terms of assembly, monomer.

The protein localises to the cytoplasm. The enzyme catalyses (2R)-3-phosphoglycerate + ATP = (2R)-3-phospho-glyceroyl phosphate + ADP. It participates in carbohydrate degradation; glycolysis; pyruvate from D-glyceraldehyde 3-phosphate: step 2/5. This chain is Phosphoglycerate kinase, found in Porphyromonas gingivalis (strain ATCC BAA-308 / W83).